The chain runs to 642 residues: MDPPRDIQHFKRNIASRSTVSSCSSLAMEIKRKKIRESMFFPSEDCDIKEKMEFEMRMRAGAYKLMVASTKKEQVLDASRSLLTCNARIKAYMSEAQKRTGHQDFRRPSDSQGQVPCKGKVAISGLRIPLFWKDSEHFNSKGNTQRVAVFCLMKIGSEIFDTEMVIADSSMTDICFEGVKIFSEVKPDFELTFELYICGLDEEATFANTPKKLARKLRSSFGRSSGRKLCPLLDGGDPDTFLQSNPIPPGARYSLLAYTTLGLEQAEGSFQSHSLIILQNVEASSWLPLYGNLCCQLVAQPDCMTLDMMSGFLSQQQSIEGLQRRCRLYCVLKAGKISCYYSPEEIQAKVEPILIIPINKETRIRVVENDHQRPGSRLNLINPGNGDSASHVFIAESPDVLQEWLDSLWQHIYDQSQWQHTCDKLMEIDVLSPRKPPLFLTKQADSVYNDLSIGSPGKFESLTDIIHNKIEETNGRFLIGQEEETEPPHWAALFEGSRPIVVQKTVLSPGKESNRSITSPDTGSKKKRRAPPPPPDKLPFTSVSTNQEKENCKGPKPRAGRPSLDAKFSAIIQQLQKSHTSTRKNAPLGQIETGQQPEKRAEESDLPEYTKKEYIVDPQPPVPAPRNKLRMSFREKMNPKAW.

The REM-1 domain occupies 30-105; sequence IKRKKIRESM…AQKRTGHQDF (76 aa). A PH domain is found at 306–413; it reads LDMMSGFLSQ…WLDSLWQHIY (108 aa). Disordered stretches follow at residues 505–563 and 575–642; these read TVLS…GRPS and LQKS…PKAW. Composition is skewed to basic and acidic residues over residues 597–615 and 632–642; these read PEKR…KEYI and SFREKMNPKAW.

In Danio rerio (Zebrafish), this protein is Rhotekin-2 (rtkn2).